The following is a 1188-amino-acid chain: DNA-directed RNA polymerase II subunit 2 (1188 aa).

Position 800 (aspartate 800) interacts with Mg(2+). Disordered stretches follow at residues 852–871 (SYDKLDDDGLAPPGTRVSGE) and 877–897 (KTTPISQDEAQGQSSRYTRRD). A compositionally biased stretch (polar residues) spans 879–892 (TPISQDEAQGQSSR). The Zn(2+) site is built by cysteine 1124, cysteine 1127, cysteine 1142, and cysteine 1145. A C4-type zinc finger spans residues 1124 to 1145 (CEVCGLIAIANLKKNSFECRGC).

It belongs to the RNA polymerase beta chain family. As to quaternary structure, component of the RNA polymerase II complex consisting of at least 12 subunits.

Its subcellular location is the nucleus. The catalysed reaction is RNA(n) + a ribonucleoside 5'-triphosphate = RNA(n+1) + diphosphate. DNA-dependent RNA polymerase catalyzes the transcription of DNA into RNA using the four ribonucleoside triphosphates as substrates. Second largest component of RNA polymerase II which synthesizes mRNA precursors and many functional non-coding RNAs. Proposed to contribute to the polymerase catalytic activity and forms the polymerase active center together with the largest subunit. Pol II is the central component of the basal RNA polymerase II transcription machinery. It is composed of mobile elements that move relative to each other. NRPB2 is part of the core element with the central large cleft, the clamp element that moves to open and close the cleft and the jaws that are thought to grab the incoming DNA template. Functionally, essential for the completion of the three rounds of mitosis in female megaspores required for the development of mature gametophytes. The chain is DNA-directed RNA polymerase II subunit 2 (NRPB2) from Arabidopsis thaliana (Mouse-ear cress).